A 141-amino-acid polypeptide reads, in one-letter code: Small ribosomal subunit protein uS12 (141 aa).

It belongs to the universal ribosomal protein uS12 family. Part of the 30S ribosomal subunit.

In terms of biological role, with S4 and S5 plays an important role in translational accuracy. Located at the interface of the 30S and 50S subunits. The protein is Small ribosomal subunit protein uS12 of Methanothermobacter thermautotrophicus (strain ATCC 29096 / DSM 1053 / JCM 10044 / NBRC 100330 / Delta H) (Methanobacterium thermoautotrophicum).